Consider the following 244-residue polypeptide: 3-deoxy-manno-octulosonate cytidylyltransferase (244 aa).

Belongs to the KdsB family.

The protein localises to the cytoplasm. The enzyme catalyses 3-deoxy-alpha-D-manno-oct-2-ulosonate + CTP = CMP-3-deoxy-beta-D-manno-octulosonate + diphosphate. Its pathway is nucleotide-sugar biosynthesis; CMP-3-deoxy-D-manno-octulosonate biosynthesis; CMP-3-deoxy-D-manno-octulosonate from 3-deoxy-D-manno-octulosonate and CTP: step 1/1. The protein operates within bacterial outer membrane biogenesis; lipopolysaccharide biosynthesis. Functionally, activates KDO (a required 8-carbon sugar) for incorporation into bacterial lipopolysaccharide in Gram-negative bacteria. The protein is 3-deoxy-manno-octulosonate cytidylyltransferase of Rickettsia canadensis (strain McKiel).